A 510-amino-acid chain; its full sequence is Gelatinase (510 aa).

Positions 1–30 (MMKGNKILYILGTGIFVGSSCLFSSLFVAA) are cleaved as a signal peptide. A propeptide spanning residues 31 to 192 (EEQVYSESEV…IMEKQDLTEH (162 aa)) is cleaved from the precursor. Asp-324 contributes to the Ca(2+) binding site. Residue His-328 participates in Zn(2+) binding. Glu-329 is a catalytic residue. Positions 332 and 352 each coordinate Zn(2+). Ser-376 is a binding site for Ca(2+). His-419 acts as the Proton donor in catalysis.

The protein belongs to the peptidase M4 family.

The protein resides in the secreted. It catalyses the reaction Preferential cleavage: Xaa-|-Leu, Xaa-|-Phe, Xaa-|-Tyr, Xaa-|-Ala.. With respect to regulation, inhibited by L-leucine hydroxamate and phosphoramidon. Not inhibited by phenylmethanesulfonyl fluoride. Reversibly inactivated by straight-chain aliphatic alcohols. Functionally, metalloprotease capable of the hydrolysis of insoluble hydrophobic substrates. Hydrolyzes azocoll and gelatin and, at a lower rate, soluble and insoluble collagens. Does not cleave short synthetic peptides. Preferentially hydrolyzes the 24-Phe-|-Phe-25 bond in the insulin B-chain, followed by the 5-His-|-Leu-6 bond. Inactivates endothelin-1, primarily by cleavage of the 5-Ser-|-Leu-6 and 16-His-|-Leu-17 bonds. Hydrolyzes the alpha chain of C3 to generate a C3b-like protein. Inhibits complement-mediated hemolysis and opsinization of bacteria. Hydrolyzes the insect antimicrobial peptide cecropin. Decreases the length of E.faecalis chains via the activation of autolysin. Degrades polymerized fibrin. This chain is Gelatinase, found in Enterococcus faecalis (strain ATCC 700802 / V583).